Here is a 233-residue protein sequence, read N- to C-terminus: UPF0173 metal-dependent hydrolase Igni_1254 (233 aa).

This sequence belongs to the UPF0173 family.

In Ignicoccus hospitalis (strain KIN4/I / DSM 18386 / JCM 14125), this protein is UPF0173 metal-dependent hydrolase Igni_1254.